Here is a 382-residue protein sequence, read N- to C-terminus: Elloramycin glycosyltransferase ElmGT (382 aa).

It belongs to the glycosyltransferase 28 family.

The catalysed reaction is 8-demethyltetracenomycin C + dTDP-beta-L-rhamnose = 8-demethyl-8-alpha-L-rhamnosyl-tetracenomycin C + dTDP + H(+). It participates in antibiotic biosynthesis. Glycosyltransferase that transfers an L-rhamnose moiety from dTDP-L-rhamnose to the elloramycin aglycone 8-demethyl-tetracenomycin C (8DMTC) in elloramycin biosynthesis, an antitumor polyketide. Possesses donor substrate flexibility: able to transfer at least 11 different sugars to 8DMTC, such as NDP-D-glucose, as well as NDP-L-digitoxose, including both L- and D-isomeric forms of some sugars. This chain is Elloramycin glycosyltransferase ElmGT, found in Streptomyces olivaceus.